We begin with the raw amino-acid sequence, 185 residues long: Ribosome-recycling factor (185 aa).

Belongs to the RRF family.

Its subcellular location is the cytoplasm. Responsible for the release of ribosomes from messenger RNA at the termination of protein biosynthesis. May increase the efficiency of translation by recycling ribosomes from one round of translation to another. In Pseudomonas putida (strain ATCC 700007 / DSM 6899 / JCM 31910 / BCRC 17059 / LMG 24140 / F1), this protein is Ribosome-recycling factor.